We begin with the raw amino-acid sequence, 558 residues long: Glucose-6-phosphate isomerase (558 aa).

Ala-2 carries the N-acetylalanine modification. Position 12 is an N6-acetyllysine (Lys-12). Position 34 is an N6-(2-hydroxyisobutyryl)lysine (Lys-34). Phosphoserine is present on Ser-107. At Thr-109 the chain carries Phosphothreonine. Lys-142 carries the N6-acetyllysine modification. Residue 159 to 160 (GS) coordinates D-glucose 6-phosphate. Ser-185 carries the post-translational modification Phosphoserine; by CK2. 210 to 215 (SKTFTT) provides a ligand contact to D-glucose 6-phosphate. Thr-250 is modified (phosphothreonine). 3 residues coordinate D-glucose 6-phosphate: Gln-354, Glu-358, and His-389. Glu-358 (proton donor) is an active-site residue. His-389 is a catalytic residue. Lys-454 is subject to N6-acetyllysine; alternate. Lys-454 is subject to N6-malonyllysine; alternate. Lys-454 bears the N6-succinyllysine; alternate mark. Ser-455 bears the Phosphoserine mark. Residue Lys-519 participates in D-glucose 6-phosphate binding. Lys-519 is a catalytic residue.

The protein belongs to the GPI family. Homodimer; in the catalytically active form. Monomer in the secreted form. Post-translationally, phosphorylation at Ser-185 by CK2 has been shown to decrease enzymatic activity and may contribute to secretion by a non-classical secretory pathway. In terms of processing, ISGylated.

It is found in the cytoplasm. The protein resides in the secreted. The catalysed reaction is alpha-D-glucose 6-phosphate = beta-D-fructose 6-phosphate. The protein operates within carbohydrate degradation; glycolysis; D-glyceraldehyde 3-phosphate and glycerone phosphate from D-glucose: step 2/4. Its function is as follows. In the cytoplasm, catalyzes the conversion of glucose-6-phosphate to fructose-6-phosphate, the second step in glycolysis, and the reverse reaction during gluconeogenesis. Besides it's role as a glycolytic enzyme, also acts as a secreted cytokine: acts as an angiogenic factor (AMF) that stimulates endothelial cell motility. Acts as a neurotrophic factor, neuroleukin, for spinal and sensory neurons. It is secreted by lectin-stimulated T-cells and induces immunoglobulin secretion. This Macaca fascicularis (Crab-eating macaque) protein is Glucose-6-phosphate isomerase.